A 201-amino-acid polypeptide reads, in one-letter code: Orotidine 5'-phosphate decarboxylase (201 aa).

Substrate contacts are provided by residues Asp-8, Lys-26, 52 to 61 (DLKFCDIPST), Thr-106, Arg-153, Gln-161, Gly-180, and Arg-181. Lys-54 functions as the Proton donor in the catalytic mechanism.

Belongs to the OMP decarboxylase family. Type 1 subfamily. Homodimer.

It catalyses the reaction orotidine 5'-phosphate + H(+) = UMP + CO2. Its pathway is pyrimidine metabolism; UMP biosynthesis via de novo pathway; UMP from orotate: step 2/2. Functionally, catalyzes the decarboxylation of orotidine 5'-monophosphate (OMP) to uridine 5'-monophosphate (UMP). The sequence is that of Orotidine 5'-phosphate decarboxylase (pyrF) from Thermotoga maritima (strain ATCC 43589 / DSM 3109 / JCM 10099 / NBRC 100826 / MSB8).